Consider the following 2797-residue polypeptide: Nonribosomal peptide synthetase penN (2797 aa).

The adenylation 1 stretch occupies residues 239–625 (SRPDHPAICA…ARKDSQVKIR (387 aa)). Residues 751–824 (TDTERHVHRF…DIVSLVRTAT (74 aa)) enclose the Carrier 1 domain. O-(pantetheine 4'-phosphoryl)serine is present on serine 785. The disordered stretch occupies residues 830–856 (PSAGAEISRSDAPTESPATGSFEGSGY). The interval 870 to 1299 (QSFSQARMWF…DIEIGSLLLT (430 aa)) is condensation 1. The interval 1328-1731 (FHQQVAAHGD…GRMDQQVKIR (404 aa)) is adenylation 2. The segment at 1857-1953 (LEIGTGTGMI…VIKQLIQLHD (97 aa)) is methyltransferase. The Carrier 2 domain maps to 2277-2351 (SFTDDIERAM…RLAGRVRGFR (75 aa)). Serine 2311 carries the post-translational modification O-(pantetheine 4'-phosphoryl)serine. Residues 2516-2658 (YDGISLSSIL…VNRTLIRVQL (143 aa)) form a condensation 2 region.

The protein belongs to the NRP synthetase family.

The catalysed reaction is O-methyl-L-tyrosine + anthranilate + S-adenosyl-L-methionine + 2 ATP = (-)-4'-methoxycyclopeptine + 2 AMP + S-adenosyl-L-homocysteine + 2 diphosphate + 2 H(+). It carries out the reaction anthranilate + L-phenylalanine + S-adenosyl-L-methionine + 2 ATP = cyclopeptine + 2 AMP + S-adenosyl-L-homocysteine + 2 diphosphate + 2 H(+). The protein operates within secondary metabolite biosynthesis. It functions in the pathway alkaloid biosynthesis. It participates in mycotoxin biosynthesis. Its function is as follows. Nonribosomal peptide synthetase; part of the gene cluster that mediates the biosynthesis of penigequinolones, potent insecticidal alkaloids that contain a highly modified 10-carbon prenyl group. The first stage is catalyzed by the nonribosomal peptide synthetase penN that condenses anthranilic acid and O-methyl-L-tyrosine to produce 4'-methoxycyclopeptin. 4'-methoxycyclopeptin is then converted to 4'-methoxydehydrocyclopeptin by the ketoglutarate-dependent dioxygenase penM through dehydrogenation to form a double bond between C-alpha and C-beta of the O-methyltyrosine side chain. PenM also converts its first product methoxydehydrocyclopeptin to 4'-methoxycyclopenin. The following conversion of 4'methoxycyclopenin into 4'-methoxyviridicatin is catalyzed by the cyclopenase penL. 4'-methoxyviridicatin is the precursor of quinolone natural products, and is further converted to quinolinone B. The prenyltransferase penI then catalyzes the canonical Friedel-Crafts alkylation of quinolinone B with dimethylallyl cation to yield dimethylallyl quinolone, which is subjected to FAD-dependent dehydrogenation by the FAD-linked oxidoreductase penH to yield conjugated aryl diene. The delta(3') double bond then serves as the site of the second alkylation with DMAPP catalyzed by the prenyltransferase penG to yield a carbenium ion intermediate, which can be attacked by H(2)O to yield a styrenyl quinolone containing a C3'-hydroxyprenyl chain, or undergo cyclization to yield yaequinolones J1 and J2. The conversion of the styrenyl quinolone into the tetrahydrofuran-containing yaequinolone C is performed by the FAD-dependent monooxygenase penE and involves epoxidation of the terminal C7'-C8' olefin, followed by epoxide ring opening initiated by the C3' hydroxyl group. The predicted cysteine hydrolase penJ acts as an epoxide hydrolase that enhances the rate of the 5-exo-tet cyclization step, increasing the yield of yaequinolone C. PenF catalyzes the cationic rearrangement of the epoxide formed by penE (before ring opening to produce yaequinolone C) into yaequinolone D. Finally, the short-chain dehydrogenase/reductase (SDR)-like reductase penD, catalyzes both the dehydration of yaequinolone D and the reduction of the resulting oxonium to yield penigequinolone. This is Nonribosomal peptide synthetase penN from Penicillium thymicola.